We begin with the raw amino-acid sequence, 251 residues long: Triosephosphate isomerase (251 aa).

A substrate-binding site is contributed by Asn10 to Lys12. The active-site Electrophile is the His98. Glu169 (proton acceptor) is an active-site residue. Residues Gly175, Ser213, and Gly234–Gly235 contribute to the substrate site.

This sequence belongs to the triosephosphate isomerase family. Homodimer.

It localises to the cytoplasm. The enzyme catalyses D-glyceraldehyde 3-phosphate = dihydroxyacetone phosphate. Its pathway is carbohydrate biosynthesis; gluconeogenesis. It functions in the pathway carbohydrate degradation; glycolysis; D-glyceraldehyde 3-phosphate from glycerone phosphate: step 1/1. Its function is as follows. Involved in the gluconeogenesis. Catalyzes stereospecifically the conversion of dihydroxyacetone phosphate (DHAP) to D-glyceraldehyde-3-phosphate (G3P). The sequence is that of Triosephosphate isomerase from Paracidovorax citrulli (strain AAC00-1) (Acidovorax citrulli).